A 200-amino-acid chain; its full sequence is Small ribosomal subunit protein uS4 (200 aa).

The disordered stretch occupies residues 22 to 43 (TGKELERRPYAPGQHGPTQRKK). The 79-residue stretch at 92–170 (QRLDNIVYRL…VPEYVTFDAE (79 aa)) folds into the S4 RNA-binding domain.

It belongs to the universal ribosomal protein uS4 family. As to quaternary structure, part of the 30S ribosomal subunit. Contacts protein S5. The interaction surface between S4 and S5 is involved in control of translational fidelity.

One of the primary rRNA binding proteins, it binds directly to 16S rRNA where it nucleates assembly of the body of the 30S subunit. Functionally, with S5 and S12 plays an important role in translational accuracy. The sequence is that of Small ribosomal subunit protein uS4 from Listeria monocytogenes serovar 1/2a (strain ATCC BAA-679 / EGD-e).